Here is a 282-residue protein sequence, read N- to C-terminus: Thiazole synthase (282 aa).

Lys113 acts as the Schiff-base intermediate with DXP in catalysis. Residues Gly174, 201-202 (AG), and 223-224 (NT) each bind 1-deoxy-D-xylulose 5-phosphate.

The protein belongs to the ThiG family. Homotetramer. Forms heterodimers with either ThiH or ThiS.

The protein localises to the cytoplasm. The catalysed reaction is [ThiS sulfur-carrier protein]-C-terminal-Gly-aminoethanethioate + 2-iminoacetate + 1-deoxy-D-xylulose 5-phosphate = [ThiS sulfur-carrier protein]-C-terminal Gly-Gly + 2-[(2R,5Z)-2-carboxy-4-methylthiazol-5(2H)-ylidene]ethyl phosphate + 2 H2O + H(+). The protein operates within cofactor biosynthesis; thiamine diphosphate biosynthesis. In terms of biological role, catalyzes the rearrangement of 1-deoxy-D-xylulose 5-phosphate (DXP) to produce the thiazole phosphate moiety of thiamine. Sulfur is provided by the thiocarboxylate moiety of the carrier protein ThiS. In vitro, sulfur can be provided by H(2)S. In Cupriavidus metallidurans (strain ATCC 43123 / DSM 2839 / NBRC 102507 / CH34) (Ralstonia metallidurans), this protein is Thiazole synthase.